Here is a 41-residue protein sequence, read N- to C-terminus: TDCGMLQRIKVKQQWASVYSSGIAREDFGEAIWKAVFALAP.

Residues 2–41 (DCGMLQRIKVKQQWASVYSSGIAREDFGEAIWKAVFALAP) enclose the Globin domain.

This sequence belongs to the globin family. As to quaternary structure, giant hemoglobin is composed of four heme-containing chains (AI to AIV), and two linker chains (AV and AVI).

This is Giant hemoglobin AI chain from Lamellibrachia sp. (Deep-sea giant tube worm).